Reading from the N-terminus, the 380-residue chain is Cytochrome b (380 aa).

4 helical membrane-spanning segments follow: residues 34–54 (FGSL…LLAA), 78–99 (WLIR…YLHI), 114–134 (WNTG…GYVL), and 179–199 (FFTL…IHLT). 2 residues coordinate heme b: His84 and His98. His183 and His197 together coordinate heme b. Position 202 (His202) interacts with a ubiquinone. 4 helical membrane passes run 227–247 (LKDI…ALFS), 289–309 (LGGV…PLLH), 321–341 (FSQL…WVGS), and 348–368 (FIII…ILFP).

The protein belongs to the cytochrome b family. In terms of assembly, the cytochrome bc1 complex contains 11 subunits: 3 respiratory subunits (MT-CYB, CYC1 and UQCRFS1), 2 core proteins (UQCRC1 and UQCRC2) and 6 low-molecular weight proteins (UQCRH/QCR6, UQCRB/QCR7, UQCRQ/QCR8, UQCR10/QCR9, UQCR11/QCR10 and a cleavage product of UQCRFS1). This cytochrome bc1 complex then forms a dimer. The cofactor is heme b.

It localises to the mitochondrion inner membrane. Functionally, component of the ubiquinol-cytochrome c reductase complex (complex III or cytochrome b-c1 complex) that is part of the mitochondrial respiratory chain. The b-c1 complex mediates electron transfer from ubiquinol to cytochrome c. Contributes to the generation of a proton gradient across the mitochondrial membrane that is then used for ATP synthesis. The protein is Cytochrome b (MT-CYB) of Antigone rubicunda (Brolga crane).